A 189-amino-acid polypeptide reads, in one-letter code: Parkinson disease protein 7 homolog (189 aa).

An N-acetylalanine modification is found at Ala2. S-palmitoyl cysteine attachment occurs at residues Cys46 and Cys53. At Tyr67 the chain carries Phosphotyrosine. Cys106 (nucleophile) is an active-site residue. Residue Cys106 is modified to Cysteine sulfinic acid (-SO2H); alternate. Cys106 carries S-palmitoyl cysteine; alternate lipidation. The active site involves His126. Lys130 participates in a covalent cross-link: Glycyl lysine isopeptide (Lys-Gly) (interchain with G-Cter in SUMO). Lys148 is modified (N6-acetyllysine). Lys182 is subject to N6-succinyllysine.

This sequence belongs to the peptidase C56 family. In terms of assembly, homodimer. Binds EFCAB6/DJBP and PIAS2. Part of a ternary complex containing PARK7, EFCAB6/DJBP and AR. Interacts (via N-terminus) with OTUD7B. Interacts with BBS1, HIPK1, CLCF1 and MTERF. Forms a complex with PINK1 and PRKN. Interacts (via C-terminus) with NCF1; the interaction is enhanced by LPS and modulates NCF1 phosphorylation and membrane translocation. Interacts with NENF. Deglycase activity does not require glutathione as a cofactor, however, glycated glutathione constitutes a PARK7 substrate. is required as a cofactor. In terms of processing, sumoylated on Lys-130 by PIAS2 or PIAS4; which is essential for cell-growth promoting activity and transforming activity. Post-translationally, undergoes cleavage of a C-terminal peptide and subsequent activation of protease activity in response to oxidative stress. As to expression, ubiquitous. Detected on epididymal sperm. Highly expressed in testis and prostate. Detected at lower levels in heart, lung, brain, liver, kidney, seminal vesicle, caput and corpus epididymis.

The protein resides in the cell membrane. Its subcellular location is the cytoplasm. The protein localises to the membrane raft. It localises to the nucleus. It is found in the mitochondrion. The protein resides in the endoplasmic reticulum. The enzyme catalyses N(omega)-(1-hydroxy-2-oxopropyl)-L-arginyl-[protein] + H2O = lactate + L-arginyl-[protein] + H(+). The catalysed reaction is N(6)-(1-hydroxy-2-oxopropyl)-L-lysyl-[protein] + H2O = lactate + L-lysyl-[protein] + H(+). It catalyses the reaction S-(1-hydroxy-2-oxopropyl)-L-cysteinyl-[protein] + H2O = lactate + L-cysteinyl-[protein] + H(+). It carries out the reaction N(omega)-(1-hydroxy-2-oxoethyl)-L-arginyl-[protein] + H2O = L-arginyl-[protein] + glycolate + H(+). The enzyme catalyses N(6)-(1-hydroxy-2-oxoethyl)-L-lysyl-[protein] + H2O = glycolate + L-lysyl-[protein] + H(+). The catalysed reaction is S-(1-hydroxy-2-oxoethyl)-L-cysteinyl-[protein] + H2O = glycolate + L-cysteinyl-[protein] + H(+). It catalyses the reaction N(2)-(1-hydroxy-2-oxopropyl)-dGTP + H2O = lactate + dGTP + H(+). It carries out the reaction N(2)-(1-hydroxy-2-oxopropyl)-GTP + H2O = lactate + GTP + H(+). The enzyme catalyses N(2)-(1-hydroxy-2-oxopropyl)-GDP + H2O = lactate + GDP + H(+). The catalysed reaction is N(2)-(1-hydroxy-2-oxopropyl)-GMP + H2O = lactate + GMP + H(+). It catalyses the reaction N(2)-(1-hydroxy-2-oxoethyl)-dGTP + H2O = dGTP + glycolate + H(+). It carries out the reaction N(2)-(1-hydroxy-2-oxoethyl)-GTP + H2O = glycolate + GTP + H(+). The enzyme catalyses N(2)-(1-hydroxy-2-oxoethyl)-GDP + H2O = glycolate + GDP + H(+). The catalysed reaction is N(2)-(1-hydroxy-2-oxoethyl)-GMP + H2O = glycolate + GMP + H(+). It catalyses the reaction an N(2)-(1-hydroxy-2-oxopropyl)-guanosine in RNA + H2O = a guanosine in RNA + lactate + H(+). It carries out the reaction an N(2)-(1-hydroxy-2-oxopropyl)-2'-deoxyguanosine in DNA + H2O = a 2'-deoxyguanosine in DNA + lactate + H(+). The enzyme catalyses an N(2)-(1-hydroxy-2-oxoethyl)-guanosine in RNA + H2O = a guanosine in RNA + glycolate + H(+). The catalysed reaction is an N(2)-(1-hydroxy-2-oxoethyl)-2'-deoxyguanosine in DNA + H2O = a 2'-deoxyguanosine in DNA + glycolate + H(+). Protein and nucleotide deglycase that catalyzes the deglycation of the Maillard adducts formed between amino groups of proteins or nucleotides and reactive carbonyl groups of glyoxals. Thus, functions as a protein deglycase that repairs methylglyoxal- and glyoxal-glycated proteins, and releases repaired proteins and lactate or glycolate, respectively. Deglycates cysteine, arginine and lysine residues in proteins, and thus reactivates these proteins by reversing glycation by glyoxals. Acts on early glycation intermediates (hemithioacetals and aminocarbinols), preventing the formation of advanced glycation endproducts (AGE) that cause irreversible damage. Also functions as a nucleotide deglycase able to repair glycated guanine in the free nucleotide pool (GTP, GDP, GMP, dGTP) and in DNA and RNA. Is thus involved in a major nucleotide repair system named guanine glycation repair (GG repair), dedicated to reversing methylglyoxal and glyoxal damage via nucleotide sanitization and direct nucleic acid repair. Also displays an apparent glyoxalase activity that in fact reflects its deglycase activity. Plays an important role in cell protection against oxidative stress and cell death acting as oxidative stress sensor and redox-sensitive chaperone and protease; functions probably related to its primary function. It is involved in neuroprotective mechanisms like the stabilization of NFE2L2 and PINK1 proteins, male fertility as a positive regulator of androgen signaling pathway as well as cell growth and transformation through, for instance, the modulation of NF-kappa-B signaling pathway. Eliminates hydrogen peroxide and protects cells against hydrogen peroxide-induced cell death. Required for correct mitochondrial morphology and function as well as for autophagy of dysfunctional mitochondria. Plays a role in regulating expression or stability of the mitochondrial uncoupling proteins SLC25A14 and SLC25A27 in dopaminergic neurons of the substantia nigra pars compacta and attenuates the oxidative stress induced by calcium entry into the neurons via L-type channels during pacemaking. Regulates astrocyte inflammatory responses, may modulate lipid rafts-dependent endocytosis in astrocytes and neuronal cells. In pancreatic islets, involved in the maintenance of mitochondrial reactive oxygen species (ROS) levels and glucose homeostasis in an age- and diet dependent manner. Protects pancreatic beta cells from cell death induced by inflammatory and cytotoxic setting. Binds to a number of mRNAs containing multiple copies of GG or CC motifs and partially inhibits their translation but dissociates following oxidative stress. Metal-binding protein able to bind copper as well as toxic mercury ions, enhances the cell protection mechanism against induced metal toxicity. In macrophages, interacts with the NADPH oxidase subunit NCF1 to direct NADPH oxidase-dependent ROS production, and protects against sepsis. The sequence is that of Parkinson disease protein 7 homolog from Rattus norvegicus (Rat).